The following is a 91-amino-acid chain: Small ribosomal subunit protein uS19 (91 aa).

It belongs to the universal ribosomal protein uS19 family.

Functionally, protein S19 forms a complex with S13 that binds strongly to the 16S ribosomal RNA. This chain is Small ribosomal subunit protein uS19, found in Lactobacillus delbrueckii subsp. bulgaricus (strain ATCC 11842 / DSM 20081 / BCRC 10696 / JCM 1002 / NBRC 13953 / NCIMB 11778 / NCTC 12712 / WDCM 00102 / Lb 14).